Here is a 107-residue protein sequence, read N- to C-terminus: MTWTYILRQSDLPPGEMQRYEGGPEPVMVCNVDGDFFAVQDTCTHGDWALSDGYLDGDIVECTLHFGKFCVRTGKVKALPACKPIKVFPIKVEGDEVHVDLDNGELK.

In terms of domain architecture, Rieske spans 4-99; that stretch reads TYILRQSDLP…IKVEGDEVHV (96 aa). 4 residues coordinate [2Fe-2S] cluster: C43, H45, C62, and H65.

This sequence belongs to the bacterial ring-hydroxylating dioxygenase ferredoxin component family. This dioxygenase system consists of four proteins: the two subunits of the hydroxylase component (BnzA and BnzB), a ferredoxin (BnzC) and a ferredoxin reductase (BnzD).

It functions in the pathway aromatic compound metabolism; benzene degradation; catechol from benzene: step 1/2. Its function is as follows. This protein seems to be a 2Fe-2S ferredoxin. In Pseudomonas putida (Arthrobacter siderocapsulatus), this protein is Benzene 1,2-dioxygenase system ferredoxin subunit (bnzC).